The primary structure comprises 249 residues: tRNA (guanine-N(1)-)-methyltransferase (249 aa).

S-adenosyl-L-methionine is bound by residues glycine 113 and 132-137; that span reads VGDFVV.

This sequence belongs to the RNA methyltransferase TrmD family. In terms of assembly, homodimer.

It is found in the cytoplasm. The catalysed reaction is guanosine(37) in tRNA + S-adenosyl-L-methionine = N(1)-methylguanosine(37) in tRNA + S-adenosyl-L-homocysteine + H(+). Its function is as follows. Specifically methylates guanosine-37 in various tRNAs. This is tRNA (guanine-N(1)-)-methyltransferase from Desulforudis audaxviator (strain MP104C).